The chain runs to 327 residues: tRNA dimethylallyltransferase (327 aa).

14-21 (GPTASGKT) is a binding site for ATP. 16–21 (TASGKT) lines the substrate pocket. 2 interaction with substrate tRNA regions span residues 39-42 (DSAL) and 163-167 (QRIQR).

It belongs to the IPP transferase family. In terms of assembly, monomer. Mg(2+) is required as a cofactor.

The catalysed reaction is adenosine(37) in tRNA + dimethylallyl diphosphate = N(6)-dimethylallyladenosine(37) in tRNA + diphosphate. In terms of biological role, catalyzes the transfer of a dimethylallyl group onto the adenine at position 37 in tRNAs that read codons beginning with uridine, leading to the formation of N6-(dimethylallyl)adenosine (i(6)A). The protein is tRNA dimethylallyltransferase of Xanthomonas campestris pv. campestris (strain 8004).